The chain runs to 127 residues: Large ribosomal subunit protein uL24 (127 aa).

This sequence belongs to the universal ribosomal protein uL24 family. As to quaternary structure, part of the 50S ribosomal subunit.

In terms of biological role, one of two assembly initiator proteins, it binds directly to the 5'-end of the 23S rRNA, where it nucleates assembly of the 50S subunit. Functionally, one of the proteins that surrounds the polypeptide exit tunnel on the outside of the subunit. In Leptospira biflexa serovar Patoc (strain Patoc 1 / ATCC 23582 / Paris), this protein is Large ribosomal subunit protein uL24.